The sequence spans 196 residues: Small ribosomal subunit protein uS5 (196 aa).

An S5 DRBM domain is found at 17–80; sequence FEEKMLFVNR…AVARKNMITV (64 aa). The interval 164–196 is disordered; that stretch reads GTEVRPSLSSDSPAGRSATTEAGEGVADTGGMQ. Residues 170 to 183 are compositionally biased toward polar residues; sequence SLSSDSPAGRSATT.

It belongs to the universal ribosomal protein uS5 family. Part of the 30S ribosomal subunit. Contacts proteins S4 and S8.

With S4 and S12 plays an important role in translational accuracy. Functionally, located at the back of the 30S subunit body where it stabilizes the conformation of the head with respect to the body. The chain is Small ribosomal subunit protein uS5 from Deinococcus radiodurans (strain ATCC 13939 / DSM 20539 / JCM 16871 / CCUG 27074 / LMG 4051 / NBRC 15346 / NCIMB 9279 / VKM B-1422 / R1).